Consider the following 609-residue polypeptide: Aspartate--tRNA(Asp/Asn) ligase (609 aa).

Glutamate 175 provides a ligand contact to L-aspartate. The tract at residues 199 to 202 (QQFK) is aspartate. Residues arginine 221 and histidine 468 each coordinate L-aspartate. Residue 221-223 (RDE) participates in ATP binding. Residue glutamate 502 coordinates ATP. Arginine 509 serves as a coordination point for L-aspartate. ATP is bound at residue 554-557 (GIDR).

It belongs to the class-II aminoacyl-tRNA synthetase family. Type 1 subfamily. As to quaternary structure, homodimer.

It is found in the cytoplasm. The enzyme catalyses tRNA(Asx) + L-aspartate + ATP = L-aspartyl-tRNA(Asx) + AMP + diphosphate. Aspartyl-tRNA synthetase with relaxed tRNA specificity since it is able to aspartylate not only its cognate tRNA(Asp) but also tRNA(Asn). Reaction proceeds in two steps: L-aspartate is first activated by ATP to form Asp-AMP and then transferred to the acceptor end of tRNA(Asp/Asn). This chain is Aspartate--tRNA(Asp/Asn) ligase, found in Caulobacter sp. (strain K31).